We begin with the raw amino-acid sequence, 114 residues long: Large ribosomal subunit protein uL22 (114 aa).

This sequence belongs to the universal ribosomal protein uL22 family. Part of the 50S ribosomal subunit.

Its function is as follows. This protein binds specifically to 23S rRNA; its binding is stimulated by other ribosomal proteins, e.g. L4, L17, and L20. It is important during the early stages of 50S assembly. It makes multiple contacts with different domains of the 23S rRNA in the assembled 50S subunit and ribosome. The globular domain of the protein is located near the polypeptide exit tunnel on the outside of the subunit, while an extended beta-hairpin is found that lines the wall of the exit tunnel in the center of the 70S ribosome. The chain is Large ribosomal subunit protein uL22 from Streptococcus sanguinis (strain SK36).